Consider the following 160-residue polypeptide: SsrA-binding protein (160 aa).

Residues 130-160 (LAKGKKKHDKRADQKEQDWQRQKQRLMKHKV) form a disordered region. The segment covering 139–150 (KRADQKEQDWQR) has biased composition (basic and acidic residues). The span at 151 to 160 (QKQRLMKHKV) shows a compositional bias: basic residues.

Belongs to the SmpB family.

It is found in the cytoplasm. Its function is as follows. Required for rescue of stalled ribosomes mediated by trans-translation. Binds to transfer-messenger RNA (tmRNA), required for stable association of tmRNA with ribosomes. tmRNA and SmpB together mimic tRNA shape, replacing the anticodon stem-loop with SmpB. tmRNA is encoded by the ssrA gene; the 2 termini fold to resemble tRNA(Ala) and it encodes a 'tag peptide', a short internal open reading frame. During trans-translation Ala-aminoacylated tmRNA acts like a tRNA, entering the A-site of stalled ribosomes, displacing the stalled mRNA. The ribosome then switches to translate the ORF on the tmRNA; the nascent peptide is terminated with the 'tag peptide' encoded by the tmRNA and targeted for degradation. The ribosome is freed to recommence translation, which seems to be the essential function of trans-translation. The chain is SsrA-binding protein from Alkalilimnicola ehrlichii (strain ATCC BAA-1101 / DSM 17681 / MLHE-1).